The primary structure comprises 498 residues: ATP synthase subunit beta, chloroplastic (498 aa).

G172–T179 contacts ATP.

This sequence belongs to the ATPase alpha/beta chains family. F-type ATPases have 2 components, CF(1) - the catalytic core - and CF(0) - the membrane proton channel. CF(1) has five subunits: alpha(3), beta(3), gamma(1), delta(1), epsilon(1). CF(0) has four main subunits: a(1), b(1), b'(1) and c(9-12).

The protein resides in the plastid. It localises to the chloroplast thylakoid membrane. The catalysed reaction is ATP + H2O + 4 H(+)(in) = ADP + phosphate + 5 H(+)(out). Produces ATP from ADP in the presence of a proton gradient across the membrane. The catalytic sites are hosted primarily by the beta subunits. This Helianthus annuus (Common sunflower) protein is ATP synthase subunit beta, chloroplastic.